The following is a 155-amino-acid chain: SsrA-binding protein (155 aa).

The protein belongs to the SmpB family.

It is found in the cytoplasm. Its function is as follows. Required for rescue of stalled ribosomes mediated by trans-translation. Binds to transfer-messenger RNA (tmRNA), required for stable association of tmRNA with ribosomes. tmRNA and SmpB together mimic tRNA shape, replacing the anticodon stem-loop with SmpB. tmRNA is encoded by the ssrA gene; the 2 termini fold to resemble tRNA(Ala) and it encodes a 'tag peptide', a short internal open reading frame. During trans-translation Ala-aminoacylated tmRNA acts like a tRNA, entering the A-site of stalled ribosomes, displacing the stalled mRNA. The ribosome then switches to translate the ORF on the tmRNA; the nascent peptide is terminated with the 'tag peptide' encoded by the tmRNA and targeted for degradation. The ribosome is freed to recommence translation, which seems to be the essential function of trans-translation. The protein is SsrA-binding protein of Streptococcus pyogenes serotype M4 (strain MGAS10750).